The primary structure comprises 271 residues: Elongation factor Ts (271 aa).

Positions 76–79 (TDFV) are involved in Mg(2+) ion dislocation from EF-Tu.

The protein belongs to the EF-Ts family.

It is found in the cytoplasm. Functionally, associates with the EF-Tu.GDP complex and induces the exchange of GDP to GTP. It remains bound to the aminoacyl-tRNA.EF-Tu.GTP complex up to the GTP hydrolysis stage on the ribosome. This is Elongation factor Ts from Mycolicibacterium vanbaalenii (strain DSM 7251 / JCM 13017 / BCRC 16820 / KCTC 9966 / NRRL B-24157 / PYR-1) (Mycobacterium vanbaalenii).